We begin with the raw amino-acid sequence, 228 residues long: MLNKLSAEFFGTFWLVFGGCGSAILAAAFPELGIGFLGVALAFGLTVLTMAYAVGGISGGHFNPAVSLGLTVAGRLPAKDLIPYWVAQVLGAIAAAAILYVIASGKDGFSAGGLASNGYGELSPGGYSMMAGLLIEIILTAFFIIIILGSTSSLAPAGFAPIAIGFGLTLIHLVSIPVTNTSVNPARSTGVALFADRAALSQLWLFWVAPLVGAVIGAIIWKGLLGRD.

A run of 2 helical transmembrane segments spans residues 1-21 and 23-43; these read MLNK…GGCG and AILA…ALAF. The NPA 1 signature appears at 63-65; sequence NPA. The next 3 membrane-spanning stretches (helical) occupy residues 82–102, 129–149, and 154–174; these read IPYW…LYVI, MMAG…IILG, and LAPA…IHLV. The NPA 2 signature appears at 184-186; that stretch reads NPA. A helical membrane pass occupies residues 205–225; that stretch reads LFWVAPLVGAVIGAIIWKGLL.

The protein belongs to the MIP/aquaporin (TC 1.A.8) family. In terms of assembly, homotetramer.

The protein localises to the cell inner membrane. It carries out the reaction H2O(in) = H2O(out). Channel that permits osmotically driven movement of water in both directions. It is involved in the osmoregulation and in the maintenance of cell turgor during volume expansion in rapidly growing cells. It mediates rapid entry or exit of water in response to abrupt changes in osmolarity. The polypeptide is Aquaporin Z (Brucella abortus biovar 1 (strain 9-941)).